The chain runs to 131 residues: DNA-directed RNA polymerase subunit omega (131 aa).

The segment at 78 to 131 (DEPEAEAVPALSSAPDAAQSDAMGDVQFDRMTEEDLLRGLEGLVPPAATDDDGE) is disordered. Basic and acidic residues predominate over residues 104–115 (QFDRMTEEDLLR).

Belongs to the RNA polymerase subunit omega family. The RNAP catalytic core consists of 2 alpha, 1 beta, 1 beta' and 1 omega subunit. When a sigma factor is associated with the core the holoenzyme is formed, which can initiate transcription.

The catalysed reaction is RNA(n) + a ribonucleoside 5'-triphosphate = RNA(n+1) + diphosphate. Functionally, promotes RNA polymerase assembly. Latches the N- and C-terminal regions of the beta' subunit thereby facilitating its interaction with the beta and alpha subunits. The chain is DNA-directed RNA polymerase subunit omega from Beijerinckia indica subsp. indica (strain ATCC 9039 / DSM 1715 / NCIMB 8712).